The primary structure comprises 738 residues: Prolyl oligopeptidase A (738 aa).

Residues Ser581, Asp665, and His701 each act as charge relay system in the active site.

This sequence belongs to the peptidase S9A family. In terms of assembly, monomer.

The catalysed reaction is Hydrolysis of Pro-|-Xaa &gt;&gt; Ala-|-Xaa in oligopeptides.. Its function is as follows. Housekeeping prolyl oligopeptidase (POP) that behaves like a conventional POP by cleaving peptide bonds on the C-terminal side of prolyl residues within peptides that are up to approximately 30 amino acids long. The chain is Prolyl oligopeptidase A from Galerina marginata (strain CBS 339.88).